Reading from the N-terminus, the 309-residue chain is Isoflavone reductase homolog IRL (309 aa).

NADP(+) contacts are provided by residues 12-18, R37, and K46; that span reads GGTGYLG. K134 (proton acceptor) is an active-site residue. R138 provides a ligand contact to NADP(+).

Belongs to the NmrA-type oxidoreductase family. Isoflavone reductase subfamily. As to quaternary structure, monomer.

It is found in the cytoplasm. Its pathway is alkaloid biosynthesis. Reductase that may be involved in a late step of alkaloid biosynthesis. The sequence is that of Isoflavone reductase homolog IRL from Zea mays (Maize).